The sequence spans 1462 residues: Gag-Pol polyprotein (1462 aa).

Glycine 2 carries N-myristoyl glycine; by host lipidation. The segment at valine 7–leucine 31 is interaction with Gp41. A Nuclear export signal motif is present at residues leucine 16–arginine 22. A Nuclear localization signal motif is present at residues lysine 26–lysine 32. The tract at residues asparagine 191 to glutamine 228 is interaction with human PPIA/CYPA and NUP153. The tract at residues tyrosine 279–methionine 365 is dimerization/Multimerization of capsid protein p24. 2 consecutive CCHC-type zinc fingers follow at residues isoleucine 389–alanine 406 and glutamine 410–glutamate 427. Positions leucine 433–leucine 509 are disordered. Polar residues predominate over residues proline 448–glycine 465. Composition is skewed to basic and acidic residues over residues alanine 472–glycine 482 and alanine 497–arginine 507. Residues proline 512–leucine 516 form a dimerization of protease region. In terms of domain architecture, Peptidase A2 spans glutamate 532–leucine 601. Residue aspartate 536 is the For protease activity; shared with dimeric partner of the active site. Dimerization of protease regions lie at residues glycine 560 to asparagine 566 and asparagine 599 to proline 611. The Reverse transcriptase domain occupies glycine 655–tryptophan 845. Mg(2+) is bound by residues aspartate 720, aspartate 795, and aspartate 796. The tract at residues phenylalanine 837–tryptophan 845 is RT 'primer grip'. The Tryptophan repeat motif signature appears at tryptophan 1007–tryptophan 1023. In terms of domain architecture, RNase H type-1 spans isoleucine 1043–arginine 1166. 4 residues coordinate Mg(2+): aspartate 1052, glutamate 1087, aspartate 1107, and aspartate 1158. Residues glutamate 1172–glutamine 1213 form an Integrase-type zinc finger. Residues histidine 1181, histidine 1185, cysteine 1209, and cysteine 1212 each coordinate Zn(2+). Residues valine 1223 to threonine 1374 form the Integrase catalytic domain. The Mg(2+) site is built by aspartate 1233, aspartate 1285, and glutamate 1321. The segment at residues phenylalanine 1392 to aspartate 1439 is a DNA-binding region (integrase-type).

In terms of assembly, homotrimer; further assembles as hexamers of trimers. Interacts with gp41 (via C-terminus). Interacts with host CALM1; this interaction induces a conformational change in the Matrix protein, triggering exposure of the myristate group. Interacts with host AP3D1; this interaction allows the polyprotein trafficking to multivesicular bodies during virus assembly. Part of the pre-integration complex (PIC) which is composed of viral genome, matrix protein, Vpr and integrase. As to quaternary structure, homodimer; the homodimer further multimerizes as homohexamers or homopentamers. Interacts with human PPIA/CYPA. Interacts with human NUP153. Interacts with host PDZD8; this interaction stabilizes the capsid. Interacts with monkey TRIM5; this interaction destabilizes the capsid. Homodimer, whose active site consists of two apposed aspartic acid residues. In terms of assembly, heterodimer of p66 RT and p51 RT (RT p66/p51). Heterodimerization of RT is essential for DNA polymerase activity. The overall folding of the subdomains is similar in p66 RT and p51 RT but the spatial arrangements of the subdomains are dramatically different. As to quaternary structure, homotetramer; may further associate as a homohexadecamer. Part of the pre-integration complex (PIC) which is composed of viral genome, matrix protein, Vpr and integrase. Interacts with human SMARCB1/INI1 and human PSIP1/LEDGF isoform 1. Interacts with human KPNA3; this interaction might play a role in nuclear import of the pre-integration complex. Interacts with human NUP153; this interaction might play a role in nuclear import of the pre-integration complex. It depends on Mg(2+) as a cofactor. Post-translationally, specific enzymatic cleavages by the viral protease yield mature proteins. The protease is released by autocatalytic cleavage. The polyprotein is cleaved during and after budding, this process is termed maturation. Proteolytic cleavage of p66 RT removes the RNase H domain to yield the p51 RT subunit. Nucleocapsid protein p7 might be further cleaved after virus entry.

It is found in the host cell membrane. The protein resides in the host endosome. It localises to the host multivesicular body. Its subcellular location is the virion membrane. The protein localises to the host nucleus. It is found in the host cytoplasm. The protein resides in the virion. The enzyme catalyses Endopeptidase for which the P1 residue is preferably hydrophobic.. It carries out the reaction Endohydrolysis of RNA in RNA/DNA hybrids. Three different cleavage modes: 1. sequence-specific internal cleavage of RNA. Human immunodeficiency virus type 1 and Moloney murine leukemia virus enzymes prefer to cleave the RNA strand one nucleotide away from the RNA-DNA junction. 2. RNA 5'-end directed cleavage 13-19 nucleotides from the RNA end. 3. DNA 3'-end directed cleavage 15-20 nucleotides away from the primer terminus.. It catalyses the reaction 3'-end directed exonucleolytic cleavage of viral RNA-DNA hybrid.. The catalysed reaction is DNA(n) + a 2'-deoxyribonucleoside 5'-triphosphate = DNA(n+1) + diphosphate. With respect to regulation, protease: The viral protease is inhibited by many synthetic protease inhibitors (PIs), such as amprenavir, atazanavir, indinavir, loprinavir, nelfinavir, ritonavir and saquinavir. Use of protease inhibitors in tritherapy regimens permit more ambitious therapeutic strategies. Reverse transcriptase/ribonuclease H: RT can be inhibited either by nucleoside RT inhibitors (NRTIs) or by non nucleoside RT inhibitors (NNRTIs). NRTIs act as chain terminators, whereas NNRTIs inhibit DNA polymerization by binding a small hydrophobic pocket near the RT active site and inducing an allosteric change in this region. Classical NRTIs are abacavir, adefovir (PMEA), didanosine (ddI), lamivudine (3TC), stavudine (d4T), tenofovir (PMPA), zalcitabine (ddC), and zidovudine (AZT). Classical NNRTIs are atevirdine (BHAP U-87201E), delavirdine, efavirenz (DMP-266), emivirine (I-EBU), and nevirapine (BI-RG-587). The tritherapies used as a basic effective treatment of AIDS associate two NRTIs and one NNRTI. Its function is as follows. Mediates, with Gag polyprotein, the essential events in virion assembly, including binding the plasma membrane, making the protein-protein interactions necessary to create spherical particles, recruiting the viral Env proteins, and packaging the genomic RNA via direct interactions with the RNA packaging sequence (Psi). Gag-Pol polyprotein may regulate its own translation, by the binding genomic RNA in the 5'-UTR. At low concentration, the polyprotein would promote translation, whereas at high concentration, the polyprotein would encapsidate genomic RNA and then shut off translation. Functionally, targets the polyprotein to the plasma membrane via a multipartite membrane-binding signal, that includes its myristoylated N-terminus. Matrix protein is part of the pre-integration complex. Implicated in the release from host cell mediated by Vpu. Binds to RNA. In terms of biological role, forms the conical core that encapsulates the genomic RNA-nucleocapsid complex in the virion. Most core are conical, with only 7% tubular. The core is constituted by capsid protein hexamer subunits. The core is disassembled soon after virion entry. Host restriction factors such as TRIM5-alpha or TRIMCyp bind retroviral capsids and cause premature capsid disassembly, leading to blocks in reverse transcription. Capsid restriction by TRIM5 is one of the factors which restricts HIV-1 to the human species. Host PIN1 apparently facilitates the virion uncoating. On the other hand, interactions with PDZD8 or CYPA stabilize the capsid. Encapsulates and protects viral dimeric unspliced genomic RNA (gRNA). Binds these RNAs through its zinc fingers. Acts as a nucleic acid chaperone which is involved in rearangement of nucleic acid secondary structure during gRNA retrotranscription. Also facilitates template switch leading to recombination. As part of the polyprotein, participates in gRNA dimerization, packaging, tRNA incorporation and virion assembly. Its function is as follows. Aspartyl protease that mediates proteolytic cleavages of Gag and Gag-Pol polyproteins during or shortly after the release of the virion from the plasma membrane. Cleavages take place as an ordered, step-wise cascade to yield mature proteins. This process is called maturation. Displays maximal activity during the budding process just prior to particle release from the cell. Also cleaves Nef and Vif, probably concomitantly with viral structural proteins on maturation of virus particles. Hydrolyzes host EIF4GI and PABP1 in order to shut off the capped cellular mRNA translation. The resulting inhibition of cellular protein synthesis serves to ensure maximal viral gene expression and to evade host immune response. Functionally, multifunctional enzyme that converts the viral RNA genome into dsDNA in the cytoplasm, shortly after virus entry into the cell. This enzyme displays a DNA polymerase activity that can copy either DNA or RNA templates, and a ribonuclease H (RNase H) activity that cleaves the RNA strand of RNA-DNA heteroduplexes in a partially processive 3' to 5' endonucleasic mode. Conversion of viral genomic RNA into dsDNA requires many steps. A tRNA(3)-Lys binds to the primer-binding site (PBS) situated at the 5'-end of the viral RNA. RT uses the 3' end of the tRNA primer to perform a short round of RNA-dependent minus-strand DNA synthesis. The reading proceeds through the U5 region and ends after the repeated (R) region which is present at both ends of viral RNA. The portion of the RNA-DNA heteroduplex is digested by the RNase H, resulting in a ssDNA product attached to the tRNA primer. This ssDNA/tRNA hybridizes with the identical R region situated at the 3' end of viral RNA. This template exchange, known as minus-strand DNA strong stop transfer, can be either intra- or intermolecular. RT uses the 3' end of this newly synthesized short ssDNA to perform the RNA-dependent minus-strand DNA synthesis of the whole template. RNase H digests the RNA template except for two polypurine tracts (PPTs) situated at the 5'-end and near the center of the genome. It is not clear if both polymerase and RNase H activities are simultaneous. RNase H probably can proceed both in a polymerase-dependent (RNA cut into small fragments by the same RT performing DNA synthesis) and a polymerase-independent mode (cleavage of remaining RNA fragments by free RTs). Secondly, RT performs DNA-directed plus-strand DNA synthesis using the PPTs that have not been removed by RNase H as primers. PPTs and tRNA primers are then removed by RNase H. The 3' and 5' ssDNA PBS regions hybridize to form a circular dsDNA intermediate. Strand displacement synthesis by RT to the PBS and PPT ends produces a blunt ended, linear dsDNA copy of the viral genome that includes long terminal repeats (LTRs) at both ends. In terms of biological role, catalyzes viral DNA integration into the host chromosome, by performing a series of DNA cutting and joining reactions. This enzyme activity takes place after virion entry into a cell and reverse transcription of the RNA genome in dsDNA. The first step in the integration process is 3' processing. This step requires a complex comprising the viral genome, matrix protein, Vpr and integrase. This complex is called the pre-integration complex (PIC). The integrase protein removes 2 nucleotides from each 3' end of the viral DNA, leaving recessed CA OH's at the 3' ends. In the second step, the PIC enters cell nucleus. This process is mediated through integrase and Vpr proteins, and allows the virus to infect a non dividing cell. This ability to enter the nucleus is specific of lentiviruses, other retroviruses cannot and rely on cell division to access cell chromosomes. In the third step, termed strand transfer, the integrase protein joins the previously processed 3' ends to the 5' ends of strands of target cellular DNA at the site of integration. The 5'-ends are produced by integrase-catalyzed staggered cuts, 5 bp apart. A Y-shaped, gapped, recombination intermediate results, with the 5'-ends of the viral DNA strands and the 3' ends of target DNA strands remaining unjoined, flanking a gap of 5 bp. The last step is viral DNA integration into host chromosome. This involves host DNA repair synthesis in which the 5 bp gaps between the unjoined strands are filled in and then ligated. Since this process occurs at both cuts flanking the HIV genome, a 5 bp duplication of host DNA is produced at the ends of HIV-1 integration. Alternatively, Integrase may catalyze the excision of viral DNA just after strand transfer, this is termed disintegration. The sequence is that of Gag-Pol polyprotein (gag-pol) from Human immunodeficiency virus type 2 subtype A (isolate D194) (HIV-2).